The chain runs to 607 residues: UvrABC system protein C (607 aa).

Positions Thr19–Ile97 constitute a GIY-YIG domain. The region spanning Glu205 to Ile240 is the UVR domain.

Belongs to the UvrC family. In terms of assembly, interacts with UvrB in an incision complex.

It localises to the cytoplasm. The UvrABC repair system catalyzes the recognition and processing of DNA lesions. UvrC both incises the 5' and 3' sides of the lesion. The N-terminal half is responsible for the 3' incision and the C-terminal half is responsible for the 5' incision. The chain is UvrABC system protein C from Dichelobacter nodosus (strain VCS1703A).